Consider the following 189-residue polypeptide: MLLPIYLYGHPVLRKVAEDITPDYPKLKELIANMTESMYHSDGIGLAAPQIGLPIRVLVIDADPLKEDYPECAGFKRVMINAHIEERGEDLCTEYEGCLSLPAIHEKVERPTSIRIRYVDEDFQPHEEVLHGFAARVVQHEYDHIDGKLFIDHISPIRKQLIKGKLQNIIKGKVRTSYRVVTAPTGKRR.

Residues C98 and H140 each coordinate Fe cation. Residue E141 is part of the active site. H144 contacts Fe cation.

The protein belongs to the polypeptide deformylase family. Fe(2+) serves as cofactor.

It carries out the reaction N-terminal N-formyl-L-methionyl-[peptide] + H2O = N-terminal L-methionyl-[peptide] + formate. Removes the formyl group from the N-terminal Met of newly synthesized proteins. Requires at least a dipeptide for an efficient rate of reaction. N-terminal L-methionine is a prerequisite for activity but the enzyme has broad specificity at other positions. The chain is Peptide deformylase from Porphyromonas gingivalis (strain ATCC 33277 / DSM 20709 / CIP 103683 / JCM 12257 / NCTC 11834 / 2561).